Here is a 37-residue protein sequence, read N- to C-terminus: Large ribosomal subunit protein bL36 (37 aa).

This sequence belongs to the bacterial ribosomal protein bL36 family.

The polypeptide is Large ribosomal subunit protein bL36 (Histophilus somni (strain 129Pt) (Haemophilus somnus)).